The following is a 337-amino-acid chain: MVDYVTDIVVIGAGPIGIFTVFQSGMLSMQCCVIDSLNEIGGQCVALYPEKPIYDIPAYPIITAKELINNLVEQSKPFDPQYLLGQVAEKIEEYIDYLLVKTNYGTVIQCKAIIIAAGSGAFGPNRLPVDNIIDFENKSVFYSVKQISDFYDKSVMIAGGGDSAADWAVELSKVTKQLYMVHRRKNFRCSPNTSLKLDDLFQRGKINLVVPYQIKQLCGKDGKLDYVVVKNITTSEELTLQVDYLLPFFGTSANLGPILNWGITISGYQIVIDPATCRTNRNRIYAVGDVSTYPGKIKLILTGFSESAMACHDIYHIVYPNSPLNFQYSTSKGIPKV.

Residues D35, Q43, Y48, A88, F122, D289, and T330 each coordinate FAD.

It belongs to the ferredoxin--NADP reductase type 2 family. As to quaternary structure, homodimer. Requires FAD as cofactor.

It carries out the reaction 2 reduced [2Fe-2S]-[ferredoxin] + NADP(+) + H(+) = 2 oxidized [2Fe-2S]-[ferredoxin] + NADPH. This chain is Ferredoxin--NADP reductase, found in Ehrlichia ruminantium (strain Welgevonden).